The sequence spans 412 residues: Multifunctional CCA protein (412 aa).

2 residues coordinate ATP: Gly8 and Arg11. The CTP site is built by Gly8 and Arg11. Residues Asp21 and Asp23 each contribute to the Mg(2+) site. ATP contacts are provided by Arg91, Arg137, and Arg140. Residues Arg91, Arg137, and Arg140 each contribute to the CTP site. An HD domain is found at 228 to 329 (TGIHTMMVLA…LKVFDKADAW (102 aa)).

It belongs to the tRNA nucleotidyltransferase/poly(A) polymerase family. Bacterial CCA-adding enzyme type 1 subfamily. Monomer. Can also form homodimers and oligomers. It depends on Mg(2+) as a cofactor. Ni(2+) is required as a cofactor.

It carries out the reaction a tRNA precursor + 2 CTP + ATP = a tRNA with a 3' CCA end + 3 diphosphate. It catalyses the reaction a tRNA with a 3' CCA end + 2 CTP + ATP = a tRNA with a 3' CCACCA end + 3 diphosphate. Functionally, catalyzes the addition and repair of the essential 3'-terminal CCA sequence in tRNAs without using a nucleic acid template. Adds these three nucleotides in the order of C, C, and A to the tRNA nucleotide-73, using CTP and ATP as substrates and producing inorganic pyrophosphate. tRNA 3'-terminal CCA addition is required both for tRNA processing and repair. Also involved in tRNA surveillance by mediating tandem CCA addition to generate a CCACCA at the 3' terminus of unstable tRNAs. While stable tRNAs receive only 3'-terminal CCA, unstable tRNAs are marked with CCACCA and rapidly degraded. The chain is Multifunctional CCA protein from Aeromonas hydrophila subsp. hydrophila (strain ATCC 7966 / DSM 30187 / BCRC 13018 / CCUG 14551 / JCM 1027 / KCTC 2358 / NCIMB 9240 / NCTC 8049).